We begin with the raw amino-acid sequence, 585 residues long: Cytoplasmic polyadenylation element-binding protein 1 (585 aa).

The tract at residues 1–32 is disordered; sequence MQHQLKACGDVKTSSRAQQNHRRSTAASAKRS. 2 RRM domains span residues 251–356 and 373–444; these read RKVF…PWRL and RTVF…HAET. Positions 513–533 are disordered; sequence DQTRILPRPPHHPAAHHSHQR. Basic residues predominate over residues 521–532; the sequence is PPHHPAAHHSHQ.

Interacts with fbf-1.

Its function is as follows. Cytoplasmic polyadenylation element binding protein that binds to and regulates the translation of specific mRNAs. Essential for progression through meiosis. Involved in spermatogenesis. The sequence is that of Cytoplasmic polyadenylation element-binding protein 1 (cpb-1) from Caenorhabditis briggsae.